The sequence spans 422 residues: Serine--tRNA ligase (422 aa).

229 to 231 (TAE) serves as a coordination point for L-serine. 260-262 (RKE) lines the ATP pocket. L-serine is bound at residue Glu283. 347–350 (EISS) is an ATP binding site. Residue Ser383 participates in L-serine binding.

The protein belongs to the class-II aminoacyl-tRNA synthetase family. Type-1 seryl-tRNA synthetase subfamily. In terms of assembly, homodimer. The tRNA molecule binds across the dimer.

It localises to the cytoplasm. It carries out the reaction tRNA(Ser) + L-serine + ATP = L-seryl-tRNA(Ser) + AMP + diphosphate + H(+). It catalyses the reaction tRNA(Sec) + L-serine + ATP = L-seryl-tRNA(Sec) + AMP + diphosphate + H(+). Its pathway is aminoacyl-tRNA biosynthesis; selenocysteinyl-tRNA(Sec) biosynthesis; L-seryl-tRNA(Sec) from L-serine and tRNA(Sec): step 1/1. Functionally, catalyzes the attachment of serine to tRNA(Ser). Is also able to aminoacylate tRNA(Sec) with serine, to form the misacylated tRNA L-seryl-tRNA(Sec), which will be further converted into selenocysteinyl-tRNA(Sec). In Citrifermentans bemidjiense (strain ATCC BAA-1014 / DSM 16622 / JCM 12645 / Bem) (Geobacter bemidjiensis), this protein is Serine--tRNA ligase.